We begin with the raw amino-acid sequence, 221 residues long: Transcription factor bHLH148 (221 aa).

Disordered stretches follow at residues M1 to H45 and L70 to V89. Low complexity-rich tracts occupy residues S26–S41 and S72–A82. The bHLH domain maps to K148–L197.

In terms of assembly, homodimer. Interacts with PRE3. Binds to RSA1.

It is found in the nucleus. In terms of biological role, bHLH transcription factor that binds DNA on specific sequence 5'-CANNTG-3' in target gene promoters. Negatively regulates brassinosteroid signaling. Together with BHLH148/RITF1, regulates the transcription of several genes involved in the detoxification of reactive oxygen species (ROS) generated by salt (NaCl) stress. Confers tolerance to salt and to the oxidative stress-inducing reagents hydrogen peroxide H(2)O(2) and methyl viologen (MV). The chain is Transcription factor bHLH148 from Arabidopsis thaliana (Mouse-ear cress).